Here is a 184-residue protein sequence, read N- to C-terminus: Protein GrpE (184 aa).

Positions 1–12 are enriched in basic and acidic residues; sequence MADEQLNEKDLN. The disordered stretch occupies residues 1–22; that stretch reads MADEQLNEKDLNAEEAGAVDNG.

This sequence belongs to the GrpE family. In terms of assembly, homodimer.

It is found in the cytoplasm. In terms of biological role, participates actively in the response to hyperosmotic and heat shock by preventing the aggregation of stress-denatured proteins, in association with DnaK and GrpE. It is the nucleotide exchange factor for DnaK and may function as a thermosensor. Unfolded proteins bind initially to DnaJ; upon interaction with the DnaJ-bound protein, DnaK hydrolyzes its bound ATP, resulting in the formation of a stable complex. GrpE releases ADP from DnaK; ATP binding to DnaK triggers the release of the substrate protein, thus completing the reaction cycle. Several rounds of ATP-dependent interactions between DnaJ, DnaK and GrpE are required for fully efficient folding. The polypeptide is Protein GrpE (Pseudomonas putida (strain W619)).